Reading from the N-terminus, the 312-residue chain is tRNA dimethylallyltransferase (312 aa).

Position 15 to 22 (15 to 22 (GPTAAGKS)) interacts with ATP. 17-22 (TAAGKS) lines the substrate pocket. The tract at residues 40 to 43 (DSMQ) is interaction with substrate tRNA.

Belongs to the IPP transferase family. As to quaternary structure, monomer. Mg(2+) serves as cofactor.

The enzyme catalyses adenosine(37) in tRNA + dimethylallyl diphosphate = N(6)-dimethylallyladenosine(37) in tRNA + diphosphate. Catalyzes the transfer of a dimethylallyl group onto the adenine at position 37 in tRNAs that read codons beginning with uridine, leading to the formation of N6-(dimethylallyl)adenosine (i(6)A). The protein is tRNA dimethylallyltransferase of Streptomyces avermitilis (strain ATCC 31267 / DSM 46492 / JCM 5070 / NBRC 14893 / NCIMB 12804 / NRRL 8165 / MA-4680).